Consider the following 272-residue polypeptide: Phosphonates import ATP-binding protein PhnC (272 aa).

The ABC transporter domain maps to 2–246 (LELQRLTKTY…VLATIYGAED (245 aa)). 35–42 (GPSGAGKS) serves as a coordination point for ATP. Residues 248-272 (ASSGREPAPEREPEDTERHLAEVGR) form a disordered region. Positions 254 to 272 (PAPEREPEDTERHLAEVGR) are enriched in basic and acidic residues.

The protein belongs to the ABC transporter superfamily. Phosphonates importer (TC 3.A.1.9.1) family. As to quaternary structure, the complex is composed of two ATP-binding proteins (PhnC), two transmembrane proteins (PhnE) and a solute-binding protein (PhnD).

It localises to the cell inner membrane. It catalyses the reaction phosphonate(out) + ATP + H2O = phosphonate(in) + ADP + phosphate + H(+). Part of the ABC transporter complex PhnCDE involved in phosphonates import. Responsible for energy coupling to the transport system. In Chromohalobacter salexigens (strain ATCC BAA-138 / DSM 3043 / CIP 106854 / NCIMB 13768 / 1H11), this protein is Phosphonates import ATP-binding protein PhnC.